We begin with the raw amino-acid sequence, 391 residues long: Sister chromatid cohesion protein DCC1 (391 aa).

This sequence belongs to the DCC1 family. As to quaternary structure, component of the ctf18-RFC complex which consists of ctf18, ctf8, dscc1 and the RFC complex.

The protein resides in the nucleus. Functionally, loads pcna onto primed templates regulating velocity, spacing and restart activity of replication forks. May couple DNA replication to sister chromatid cohesion. The protein is Sister chromatid cohesion protein DCC1 (dscc1) of Danio rerio (Zebrafish).